Here is a 121-residue protein sequence, read N- to C-terminus: Probable K(+)/H(+) antiporter subunit G (121 aa).

Transmembrane regions (helical) follow at residues 10 to 32 (WAAL…GSLG), 45 to 67 (APTI…CFAV), and 72 to 94 (WVFH…LMLL).

Belongs to the CPA3 antiporters (TC 2.A.63) subunit G family. In terms of assembly, may form a hetero-oligomeric complex that consists of six subunits: PhaAB, PhaC, PhaD, PhaE, PhaF and PhaG.

The protein resides in the cell membrane. In terms of biological role, part of a K(+) efflux system which is required for the adaptation of R.meliloti to alkaline pH as well as for the infection process during symbiotic nodule development. In Rhizobium meliloti (strain 1021) (Ensifer meliloti), this protein is Probable K(+)/H(+) antiporter subunit G (phaG).